Reading from the N-terminus, the 957-residue chain is Mediator of RNA polymerase II transcription subunit 16 (957 aa).

A disordered region spans residues 855–883 (YTEVDAAPSGKTNAQGPPQQPQPQQQRRR).

This sequence belongs to the Mediator complex subunit 16 family. Component of the Mediator complex.

It localises to the nucleus. Its function is as follows. Component of the Mediator complex, a coactivator involved in the regulated transcription of nearly all RNA polymerase II-dependent genes. Mediator functions as a bridge to convey information from gene-specific regulatory proteins to the basal RNA polymerase II transcription machinery. Mediator is recruited to promoters by direct interactions with regulatory proteins and serves as a scaffold for the assembly of a functional preinitiation complex with RNA polymerase II and the general transcription factors. This chain is Mediator of RNA polymerase II transcription subunit 16 (sin4), found in Aspergillus clavatus (strain ATCC 1007 / CBS 513.65 / DSM 816 / NCTC 3887 / NRRL 1 / QM 1276 / 107).